Consider the following 263-residue polypeptide: Syntaxin-73 (263 aa).

The Cytoplasmic portion of the chain corresponds to 1–240 (MGVIDLITRV…TVTKLRSSRN (240 aa)). Serine 12 carries the post-translational modification Phosphoserine. Positions 169-231 (YEMKRIKQAR…KSTNVRLKDT (63 aa)) constitute a t-SNARE coiled-coil homology domain. The chain crosses the membrane as a helical; Anchor for type IV membrane protein span at residues 241–261 (FCIDIILLCILLGIAAFIYNS). The Vesicular segment spans residues 262–263 (VK).

Belongs to the syntaxin family. As to quaternary structure, part of the t-SNARE complex. As to expression, expressed in root, leaf, stem, flower and silique.

The protein resides in the membrane. Its function is as follows. Vesicle trafficking protein that functions in the secretory pathway. This is Syntaxin-73 (SYP73) from Arabidopsis thaliana (Mouse-ear cress).